Here is a 200-residue protein sequence, read N- to C-terminus: dITP/XTP pyrophosphatase (200 aa).

Residue 7–12 (TSNKHK) participates in substrate binding. 2 residues coordinate Mg(2+): glutamate 38 and aspartate 73. Residue aspartate 73 is the Proton acceptor of the active site. Residues serine 74, 154–157 (FGYD), lysine 177, and 182–183 (HR) contribute to the substrate site.

This sequence belongs to the HAM1 NTPase family. In terms of assembly, homodimer. Requires Mg(2+) as cofactor.

The enzyme catalyses XTP + H2O = XMP + diphosphate + H(+). The catalysed reaction is dITP + H2O = dIMP + diphosphate + H(+). It carries out the reaction ITP + H2O = IMP + diphosphate + H(+). Its function is as follows. Pyrophosphatase that catalyzes the hydrolysis of nucleoside triphosphates to their monophosphate derivatives, with a high preference for the non-canonical purine nucleotides XTP (xanthosine triphosphate), dITP (deoxyinosine triphosphate) and ITP. Seems to function as a house-cleaning enzyme that removes non-canonical purine nucleotides from the nucleotide pool, thus preventing their incorporation into DNA/RNA and avoiding chromosomal lesions. This Campylobacter jejuni subsp. jejuni serotype O:6 (strain 81116 / NCTC 11828) protein is dITP/XTP pyrophosphatase.